Consider the following 376-residue polypeptide: Cyclin-dependent kinase 9 (376 aa).

Residues 19–319 (YERLAKIGQG…SDDALNHDFF (301 aa)) enclose the Protein kinase domain. Residues 25 to 33 (IGQGTFGEV) and Lys-48 contribute to the ATP site. The active-site Proton acceptor is the Asp-153. Residues 345 to 376 (PPRRRGGHMPQQPANQARNPAATNQSEFDRVF) are disordered. A compositionally biased stretch (low complexity) spans 354-369 (PQQPANQARNPAATNQ).

This sequence belongs to the protein kinase superfamily. CMGC Ser/Thr protein kinase family. CDC2/CDKX subfamily. As to quaternary structure, associates with cyclin-T to form P-TEFb.

The protein localises to the nucleus. The catalysed reaction is L-seryl-[protein] + ATP = O-phospho-L-seryl-[protein] + ADP + H(+). The enzyme catalyses L-threonyl-[protein] + ATP = O-phospho-L-threonyl-[protein] + ADP + H(+). It carries out the reaction [DNA-directed RNA polymerase] + ATP = phospho-[DNA-directed RNA polymerase] + ADP + H(+). In terms of biological role, member of the cyclin-dependent kinase pair (CDK9/cyclin-T) complex, also called positive transcription elongation factor B (P-TEFb), which is proposed to facilitate the transition from abortive to production elongation by phosphorylating the CTD (C-terminal domain) of the large subunit of RNA polymerase II (RNAP II) and SUPT5H. The polypeptide is Cyclin-dependent kinase 9 (cdk9) (Xenopus tropicalis (Western clawed frog)).